The primary structure comprises 871 residues: Translation initiation factor IF-2 (871 aa).

2 disordered regions span residues 60–101 and 184–203; these read KKNI…QEVK and ESLKKKKKEKKSFVASKKES. The segment covering 61–72 has biased composition (basic residues); sequence KNIKTPTAKKPK. Basic and acidic residues predominate over residues 73–101; sequence KENIKEQEKLNESEKKEPKKEEKLKQEVK. The tr-type G domain occupies 370–537; sequence TRAPVITIMG…IVLLQADILE (168 aa). The segment at 379 to 386 is G1; that stretch reads GHVDHGKT. Residue 379–386 participates in GTP binding; it reads GHVDHGKT. A G2 region spans residues 404–408; the sequence is GITQH. The interval 425 to 428 is G3; the sequence is DTPG. GTP contacts are provided by residues 425–429 and 479–482; these read DTPGH and NKMD. Positions 479 to 482 are G4; sequence NKMD. The G5 stretch occupies residues 515–517; sequence SAK.

The protein belongs to the TRAFAC class translation factor GTPase superfamily. Classic translation factor GTPase family. IF-2 subfamily.

The protein localises to the cytoplasm. One of the essential components for the initiation of protein synthesis. Protects formylmethionyl-tRNA from spontaneous hydrolysis and promotes its binding to the 30S ribosomal subunits. Also involved in the hydrolysis of GTP during the formation of the 70S ribosomal complex. This chain is Translation initiation factor IF-2, found in Campylobacter jejuni subsp. jejuni serotype O:6 (strain 81116 / NCTC 11828).